The chain runs to 146 residues: Hemoglobin subunit beta/beta' (146 aa).

One can recognise a Globin domain in the interval 2 to 146 (HWSAEEKQLI…VAHALARKYH (145 aa)). Heme b contacts are provided by His63 and His92.

This sequence belongs to the globin family. As to quaternary structure, heterotetramer of two alpha chains and two beta chains. As to expression, red blood cells.

Involved in oxygen transport from the lung to the various peripheral tissues. The sequence is that of Hemoglobin subunit beta/beta' (HBB) from Chroicocephalus ridibundus (Black-headed gull).